The sequence spans 435 residues: Cyclin-dependent kinase 14 (435 aa).

Residues 75–92 (RTQSSFDPFEKTSNQPTS) are compositionally biased toward polar residues. Residues 75 to 97 (RTQSSFDPFEKTSNQPTSPKFGK) form a disordered region. Residues 101–385 (YEKLEKLGEG…AQAALNHDYF (285 aa)) enclose the Protein kinase domain. Residues 107-115 (LGEGSYATV) and lysine 130 contribute to the ATP site. Residue aspartate 222 is the Proton acceptor of the active site.

The protein belongs to the protein kinase superfamily. CMGC Ser/Thr protein kinase family. CDC2/CDKX subfamily. In terms of assembly, interacts with ccny; ccny mediates its recruitment to the plasma membrane and promotes phosphorylation of lrp6.

The protein localises to the cell membrane. The enzyme catalyses L-seryl-[protein] + ATP = O-phospho-L-seryl-[protein] + ADP + H(+). The catalysed reaction is L-threonyl-[protein] + ATP = O-phospho-L-threonyl-[protein] + ADP + H(+). In terms of biological role, serine/threonine-protein kinase involved in the control of the eukaryotic cell cycle, whose activity is controlled by an associated cyclin. Acts as a cell-cycle regulator of Wnt signaling pathway during G2/M phase by mediating the phosphorylation of lrp6, leading to the activation of the Wnt signaling pathway. This chain is Cyclin-dependent kinase 14 (cdk14), found in Xenopus laevis (African clawed frog).